Consider the following 335-residue polypeptide: Glycerol-3-phosphate dehydrogenase [NAD(P)+] (335 aa).

Residues serine 12, tryptophan 13, arginine 33, arginine 34, and lysine 107 each contribute to the NADPH site. Sn-glycerol 3-phosphate-binding residues include lysine 107, glycine 134, and serine 136. Alanine 138 contributes to the NADPH binding site. Residues lysine 189, aspartate 242, serine 252, arginine 253, and asparagine 254 each contribute to the sn-glycerol 3-phosphate site. Lysine 189 serves as the catalytic Proton acceptor. An NADPH-binding site is contributed by arginine 253. NADPH is bound by residues valine 277 and glutamate 279.

Belongs to the NAD-dependent glycerol-3-phosphate dehydrogenase family.

The protein resides in the cytoplasm. It catalyses the reaction sn-glycerol 3-phosphate + NAD(+) = dihydroxyacetone phosphate + NADH + H(+). The catalysed reaction is sn-glycerol 3-phosphate + NADP(+) = dihydroxyacetone phosphate + NADPH + H(+). It participates in membrane lipid metabolism; glycerophospholipid metabolism. Its function is as follows. Catalyzes the reduction of the glycolytic intermediate dihydroxyacetone phosphate (DHAP) to sn-glycerol 3-phosphate (G3P), the key precursor for phospholipid synthesis. The chain is Glycerol-3-phosphate dehydrogenase [NAD(P)+] from Moorella thermoacetica (strain ATCC 39073 / JCM 9320).